Here is a 285-residue protein sequence, read N- to C-terminus: MFFESRPIVGVGGGGGACGGLLTCVGRDAEGKGGADTLGREILELFLWWLLCAGLTEGICGLFCGTFGAEAPDNGSGGAGDDGTMGIGGAAEDGISGIGGAEDEGILGTAGAGDNGALGMGGAATDGTAPGIGGALADGEGLVLALLLICFNFGIPPAKISPNCGAPIPGIGGADIEGPLLLTVPELPEADETTPPPTIGALLSLVSAFFSFIPFLMSPNRASRPCITDFAGLGALPPNAGGGGGGGGAGAPAISTIRYIYGRLLQQTVVRFLVVCFVSYQKLSS.

A helical membrane pass occupies residues 197–217 (PTIGALLSLVSAFFSFIPFLM).

The protein localises to the membrane. This is an uncharacterized protein from Saccharomyces cerevisiae (strain ATCC 204508 / S288c) (Baker's yeast).